The chain runs to 372 residues: MTSTIAIDQKLINFLMFLGLPKSLSEFIWICIPILVVVLGSTLGVLVIVWLERKISAAVQQRIGPEYAGPLGIIQALIDGLKLILKEDIIPSKGDNWLFTLGPAIVVIPIVLSYLVVPFGPNLIVADIGIGIFFWIAISSVAPMGLLIAGYGSNNKYSLLGGLRAAAQAISYEIPLALCVLAIILMSHSLSTIEIVEQQAKYGILGWNIWRQPIGFFVFLISSLAECERLPFDLPEAEEELVAGYQTEYCGIKFGLFYVASYINLLVSALFVSVLYLGGWDFSIPFLNDYLTSTDFFSQWELNETIVGIMTGIIGLGITLVKAYIFLFLAVLTRWTLPRIRMDQLLDLGWKFLLPVCLGNLLLTASFQITLL.

The next 8 membrane-spanning stretches (helical) occupy residues 28–48 (IWICIPILVVVLGSTLGVLVI), 65–85 (PEYAGPLGIIQALIDGLKLIL), 97–117 (WLFTLGPAIVVIPIVLSYLVV), 128–148 (IGIGIFFWIAISSVAPMGLLI), 166–186 (AAQAISYEIPLALCVLAIILM), 254–274 (FGLFYVASYINLLVSALFVSV), 312–332 (GIIGLGITLVKAYIFLFLAVL), and 352–372 (FLLPVCLGNLLLTASFQITLL).

It belongs to the complex I subunit 1 family. As to quaternary structure, NDH is composed of at least 16 different subunits, 5 of which are encoded in the nucleus.

The protein resides in the plastid. It localises to the chloroplast thylakoid membrane. It carries out the reaction a plastoquinone + NADH + (n+1) H(+)(in) = a plastoquinol + NAD(+) + n H(+)(out). The enzyme catalyses a plastoquinone + NADPH + (n+1) H(+)(in) = a plastoquinol + NADP(+) + n H(+)(out). NDH shuttles electrons from NAD(P)H:plastoquinone, via FMN and iron-sulfur (Fe-S) centers, to quinones in the photosynthetic chain and possibly in a chloroplast respiratory chain. The immediate electron acceptor for the enzyme in this species is believed to be plastoquinone. Couples the redox reaction to proton translocation, and thus conserves the redox energy in a proton gradient. In Staurastrum punctulatum (Green alga), this protein is NAD(P)H-quinone oxidoreductase subunit 1, chloroplastic.